The sequence spans 472 residues: Kynureninase 2 (472 aa).

Pyridoxal 5'-phosphate contacts are provided by residues L133, T134, 162–165 (FPSD), D247, H250, and Y272. Position 273 is an N6-(pyridoxal phosphate)lysine (K273). Pyridoxal 5'-phosphate is bound by residues W314 and N342.

Belongs to the kynureninase family. In terms of assembly, homodimer. It depends on pyridoxal 5'-phosphate as a cofactor.

Its subcellular location is the cytoplasm. The catalysed reaction is L-kynurenine + H2O = anthranilate + L-alanine + H(+). The enzyme catalyses 3-hydroxy-L-kynurenine + H2O = 3-hydroxyanthranilate + L-alanine + H(+). The protein operates within amino-acid degradation; L-kynurenine degradation; L-alanine and anthranilate from L-kynurenine: step 1/1. It functions in the pathway cofactor biosynthesis; NAD(+) biosynthesis; quinolinate from L-kynurenine: step 2/3. Functionally, catalyzes the cleavage of L-kynurenine (L-Kyn) and L-3-hydroxykynurenine (L-3OHKyn) into anthranilic acid (AA) and 3-hydroxyanthranilic acid (3-OHAA), respectively. This Neurospora crassa (strain ATCC 24698 / 74-OR23-1A / CBS 708.71 / DSM 1257 / FGSC 987) protein is Kynureninase 2 (kyn-2).